The chain runs to 637 residues: Conglutin beta 5 (637 aa).

Positions Met1–Gly30 are cleaved as a signal peptide. Composition is skewed to basic and acidic residues over residues Asp33 to Glu105, Arg136 to Glu174, and Asp184 to Glu203. Disordered stretches follow at residues Asp33–Ser221 and Glu384–Asn439. One can recognise a Cupin type-1 1 domain in the interval Tyr217 to Gln375. The span at Glu389–Lys417 shows a compositional bias: basic and acidic residues. Residues Phe434 to Glu594 form the Cupin type-1 2 domain. Asn544 is a glycosylation site (N-linked (GlcNAc...) asparagine). The segment covering Ala606–Gln615 has biased composition (low complexity). The interval Ala606–Arg626 is disordered.

Belongs to the 7S seed storage protein family. Component of globulins complexes which accumulate in seeds.

Functionally, seed storage protein. Accumulates during seed development and is hydrolyzed after germination to provide a carbon and nitrogen source for the developing seedling. The protein is Conglutin beta 5 of Lupinus angustifolius (Narrow-leaved blue lupine).